Reading from the N-terminus, the 26-residue chain is MAWTAPKITEVPLGAEINSYVCGQKK.

The pyrroloquinoline quinone (Glu-Tyr) cross-link spans glutamate 16–tyrosine 20.

This sequence belongs to the PqqA family.

Its pathway is cofactor biosynthesis; pyrroloquinoline quinone biosynthesis. Required for coenzyme pyrroloquinoline quinone (PQQ) biosynthesis. PQQ is probably formed by cross-linking a specific glutamate to a specific tyrosine residue and excising these residues from the peptide. The sequence is that of Coenzyme PQQ synthesis protein A from Gluconacetobacter diazotrophicus (strain ATCC 49037 / DSM 5601 / CCUG 37298 / CIP 103539 / LMG 7603 / PAl5).